The primary structure comprises 609 residues: MCGIVGAIAQRDVAEILLEGLRRLEYRGYDSAGLAVVDAEGHMTRLRRLGKVQMLAQAAEEHPLHGGTGIAHTRWATHGEPSEANAHPHVSEHIVVVHNGIIENHEPLREALKARGYTFVSETDTEVIAHLVNWELKQGGTLREAVLRAIPQLRGAYGTVIMDSRHPDTLLAARSGSPLVIGLGMGENFIASDQLALLPVTRRFIFLEEGDIAEITRRSVNIFDKTGAEVKRQDIESNLQYDAGDKGIYRHYMQKEIYEQPNAIKNTLTGRISHGQVDLSELGPNADELLSKVEHIQILACGTSYNSGMVSRYWFESLAGIPCDVEIASEFRYRKSAVRRNSLMITLSQSGETADTLAGLRLSKELGYLGSLAICNVPGSSLVRESDLALMTNAGTEIGVASTKAFTTQLTVLLMLVAKLSRLKGLDASIEHDIVHGLQALPSRIEQMLSQDKRIEALAEDFSDKHHALFLGRGDQYPIALEGALKLKEISYIHAEAYAAGELKHGPLALIDADMPVIVVAPNNELLEKLKSNIEEVRARGGQLYVFADQDAGFVGSDNMHIIEMPHVEEVIAPIFYTVPLQLLAYHVALIKGTDVDQPRNLAKSVTVE.

The active-site Nucleophile; for GATase activity is Cys-2. In terms of domain architecture, Glutamine amidotransferase type-2 spans 2-218; it reads CGIVGAIAQR…EGDIAEITRR (217 aa). 2 consecutive SIS domains span residues 286–426 and 458–599; these read ADEL…LKGL and LAED…VDQP. The active-site For Fru-6P isomerization activity is Lys-604.

In terms of assembly, homodimer.

Its subcellular location is the cytoplasm. It carries out the reaction D-fructose 6-phosphate + L-glutamine = D-glucosamine 6-phosphate + L-glutamate. Catalyzes the first step in hexosamine metabolism, converting fructose-6P into glucosamine-6P using glutamine as a nitrogen source. This is Glutamine--fructose-6-phosphate aminotransferase [isomerizing] from Escherichia coli O6:H1 (strain CFT073 / ATCC 700928 / UPEC).